The chain runs to 231 residues: Class II histocompatibility antigen, B-L beta chain (231 aa).

The segment at 1–89 (FFQWSATVEC…IVAPLTLQRR (89 aa)) is beta-1. Topologically, residues 1-194 (FFQWSATVEC…PGDVSRSKLL (194 aa)) are extracellular. 2 cysteine pairs are disulfide-bonded: Cys-10–Cys-74 and Cys-111–Cys-167. N-linked (GlcNAc...) asparagine glycosylation occurs at Asn-14. The interval 90–182 (EPKVRIFALQ…SLQQPITQRW (93 aa)) is beta-2. The region spanning 91 to 179 (PKVRIFALQS…EHTSLQQPIT (89 aa)) is the Ig-like C1-type domain. A connecting peptide region spans residues 183 to 194 (EPPGDVSRSKLL). A helical membrane pass occupies residues 195–219 (MGVGGFVLGLVYLALGIFFFLCSKK). Over 220–231 (GQPDPTSPGILN) the chain is Cytoplasmic.

This sequence belongs to the MHC class II family.

The protein localises to the membrane. The chain is Class II histocompatibility antigen, B-L beta chain from Gallus gallus (Chicken).